We begin with the raw amino-acid sequence, 161 residues long: Ethylene-responsive transcription factor ERF070 (161 aa).

A disordered region spans residues 1 to 35 (MKRIIRISFTDAEATDSSSDEDTEERGGASQTRRR). Residues 78–140 (KYRGVRQRPW…IGPHAPTNFG (63 aa)) constitute a DNA-binding region (AP2/ERF).

It belongs to the AP2/ERF transcription factor family. ERF subfamily.

Its subcellular location is the nucleus. Probably acts as a transcriptional activator. Binds to the GCC-box pathogenesis-related promoter element. May be involved in the regulation of gene expression by stress factors and by components of stress signal transduction pathways. This chain is Ethylene-responsive transcription factor ERF070 (ERF070), found in Arabidopsis thaliana (Mouse-ear cress).